Here is a 336-residue protein sequence, read N- to C-terminus: HTH-type transcriptional repressor PurR (336 aa).

Residues 2 to 56 enclose the HTH lacI-type domain; the sequence is ATIKDVAKMAGVSTTTVSHVINKTRFVAKDTEEAVLSAIKQLNYSPSAVARSLKV. A DNA-binding region (H-T-H motif) is located at residues 4–23; that stretch reads IKDVAKMAGVSTTTVSHVIN. Residues 48–56 mediate DNA binding; it reads SAVARSLKV. Hypoxanthine contacts are provided by Y73, K188, T190, F219, and D273.

As to quaternary structure, homodimer.

It functions in the pathway purine metabolism; purine nucleotide biosynthesis [regulation]. Functionally, is the main repressor of the genes involved in the de novo synthesis of purine nucleotides, regulating purB, purC, purEK, purF, purHD, purL, purMN and guaBA expression. PurR is allosterically activated to bind its cognate DNA by binding the purine corepressors, hypoxanthine or guanine, thereby effecting transcription repression. This chain is HTH-type transcriptional repressor PurR, found in Haemophilus influenzae (strain ATCC 51907 / DSM 11121 / KW20 / Rd).